The primary structure comprises 729 residues: Phosphoribosylformylglycinamidine synthase subunit PurL (729 aa).

His-54 is a catalytic residue. ATP contacts are provided by Tyr-57 and Lys-96. Position 98 (Glu-98) interacts with Mg(2+). Substrate-binding positions include 99-102 and Arg-121; that span reads SHNH. His-100 (proton acceptor) is an active-site residue. Asp-122 contacts Mg(2+). Gln-245 contacts substrate. Residue Asp-273 coordinates Mg(2+). 317–319 contacts substrate; the sequence is ETQ. Residues Asp-495 and Gly-532 each coordinate ATP. Asn-533 is a Mg(2+) binding site. Ser-535 serves as a coordination point for substrate.

It belongs to the FGAMS family. In terms of assembly, monomer. Part of the FGAM synthase complex composed of 1 PurL, 1 PurQ and 2 PurS subunits.

It localises to the cytoplasm. The catalysed reaction is N(2)-formyl-N(1)-(5-phospho-beta-D-ribosyl)glycinamide + L-glutamine + ATP + H2O = 2-formamido-N(1)-(5-O-phospho-beta-D-ribosyl)acetamidine + L-glutamate + ADP + phosphate + H(+). It participates in purine metabolism; IMP biosynthesis via de novo pathway; 5-amino-1-(5-phospho-D-ribosyl)imidazole from N(2)-formyl-N(1)-(5-phospho-D-ribosyl)glycinamide: step 1/2. Functionally, part of the phosphoribosylformylglycinamidine synthase complex involved in the purines biosynthetic pathway. Catalyzes the ATP-dependent conversion of formylglycinamide ribonucleotide (FGAR) and glutamine to yield formylglycinamidine ribonucleotide (FGAM) and glutamate. The FGAM synthase complex is composed of three subunits. PurQ produces an ammonia molecule by converting glutamine to glutamate. PurL transfers the ammonia molecule to FGAR to form FGAM in an ATP-dependent manner. PurS interacts with PurQ and PurL and is thought to assist in the transfer of the ammonia molecule from PurQ to PurL. The polypeptide is Phosphoribosylformylglycinamidine synthase subunit PurL (Staphylococcus aureus (strain USA300)).